Consider the following 459-residue polypeptide: Mitochondrial distribution and morphology protein 10 (459 aa).

It belongs to the MDM10 family. As to quaternary structure, component of the ER-mitochondria encounter structure (ERMES) or MDM complex, composed of mmm1, mdm10, mdm12 and mdm34. Associates with the mitochondrial outer membrane sorting assembly machinery SAM(core) complex.

Its subcellular location is the mitochondrion outer membrane. Component of the ERMES/MDM complex, which serves as a molecular tether to connect the endoplasmic reticulum and mitochondria. Components of this complex are involved in the control of mitochondrial shape and protein biogenesis and may function in phospholipid exchange. mdm10 is involved in the late assembly steps of the general translocase of the mitochondrial outer membrane (TOM complex). Functions in the tom40-specific route of the assembly of outer membrane beta-barrel proteins, including the association of tom40 with the receptor tom22 and small TOM proteins. Can associate with the SAM(core) complex as well as the mdm12-mmm1 complex, both involved in late steps of the major beta-barrel assembly pathway, that is responsible for biogenesis of all outer membrane beta-barrel proteins. May act as a switch that shuttles between both complexes and channels precursor proteins into the tom40-specific pathway. Plays a role in mitochondrial morphology and in the inheritance of mitochondria. The sequence is that of Mitochondrial distribution and morphology protein 10 (mdmB) from Aspergillus terreus (strain NIH 2624 / FGSC A1156).